A 771-amino-acid chain; its full sequence is MPSALAIFTCRPNSHPFQERHVYLDEPIKIGRSVARCRPAQNNATFDCKVLSRNHALVWFDHKTGKFYLQDTKSSNGTFINSQRLSRGSEESPPCEILSGDIIQFGVDVTENTRKVTHGCIVSTIKLFLPDGMEARLRSDVIHAPLPSPVDKVAANTPSMYSQELFQLSQYLQEALHREQMLEQKLATLQRLLAITQEASDTSWQALIDEDRLLSRLEVMGNQLQACSKNQTEDSLRKELIALQEDKHNYETTAKESLRRVLQEKIEVVRKLSEVERSLSNTEDECTHLKEMNERTQEELRELANKYNGAVNEIKDLSDKLKVAEGKQEEIQQKGQAEKKELQHKIDEMEEKEQELQAKIEALQADNDFTNERLTALQEHLLSKSGGDCTFIHQFIECQKKLIVEGHLTKVVEETKLAKENQARAKESDLSDTLSPSKEKSSDDTTDAQMDEQDLNESLAKVSLLKALLEEERKAYRNQVEESSKQIQVLQAQLQRLHMDIENLREEKDNEITSTRDELLSARDEILLLHQAAEKAASERDTDIASLQEELKKVRAELERWRKAASEYEKEVTSLQSSFQLRCQQCEDQQKEEATRLQGELEKLRKEWNVLETECHSLKKENVLLSSELQRQEKELHNSQKQSLELTSDLSILQMTRKELENQMGSLKEQHLRDSADLKILLSKAENQAKDVQKEYEKTQTVLSELKLKFEMTEQEKQSITDELKQCKDNLKLLQEKGNNNKPWPWMPMLAALVAVTAIVLYVPGLARASP.

Residues 1–163 (MPSALAIFTC…AANTPSMYSQ (163 aa)) form a necessary for targeting to centrosomes region. Topologically, residues 1–745 (MPSALAIFTC…EKGNNNKPWP (745 aa)) are cytoplasmic. The FHA domain occupies 28-85 (IKIGRSVARCRPAQNNATFDCKVLSRNHALVWFDHKTGKFYLQDTKSSNGTFINSQRL). Phosphoserine is present on Ser-148. Coiled-coil stretches lie at residues 167–202 (QLSQYLQEALHREQMLEQKLATLQRLLAITQEASDT) and 230–381 (NQTE…QEHL). A compositionally biased stretch (basic and acidic residues) spans 420-429 (ENQARAKESD). Residues 420–450 (ENQARAKESDLSDTLSPSKEKSSDDTTDAQM) form a disordered region. Phosphoserine is present on residues Ser-431 and Ser-435. The stretch at 452–742 (EQDLNESLAK…LLQEKGNNNK (291 aa)) forms a coiled coil. Residues 746-766 (WMPMLAALVAVTAIVLYVPGL) traverse the membrane as a helical; Anchor for type IV membrane protein segment. Over 767-771 (ARASP) the chain is Extracellular.

This sequence belongs to the SLMAP family. Homodimer. Interacts with myosin. Interacts with SIKE1 and both associate with the STRIPAK core complex composed of PP2A catalytic and scaffolding subunits, the striatins (PP2A regulatory subunits), the striatin-associated proteins MOB4, STRIP1 and STRIP2, PDCD10 and members of the STE20 kinases, such as STK24 and STK26. Interacts (via FHA domain) with STK3 (when phosphorylated); the interaction associates STK3 with the STRIPAK complex. Expressed in heart (at protein level). Expressed in heart, skeletal muscle, smooth muscle, kidney, spleen, pancreas and brain.

Its subcellular location is the cell membrane. The protein localises to the sarcolemma. It is found in the cytoplasm. The protein resides in the myofibril. It localises to the sarcomere. Its subcellular location is the m line. The protein localises to the z line. It is found in the cytoskeleton. The protein resides in the microtubule organizing center. It localises to the centrosome. Its subcellular location is the endoplasmic reticulum membrane. The protein localises to the mitochondrion membrane. Associates with the striatin-interacting phosphatase and kinase (STRIPAK) core complex, forming the extended (SIKE1:SLMAP)STRIPAK complex. The (SIKE1:SLMAP)STRIPAK complex dephosphorylates STK3 leading to the inhibition of Hippo signaling and the control of cell growth. May play a role during myoblast fusion. The sequence is that of Sarcolemmal membrane-associated protein (SLMAP) from Oryctolagus cuniculus (Rabbit).